Here is a 720-residue protein sequence, read N- to C-terminus: Nucleoporin 88 (720 aa).

The stretch at 584–611 (LALCREDRKSLTEAAERLADKYEDAKYR) forms a coiled coil.

As to expression, widely expressed. Higher levels of expression are detected in highly proliferative frontal regions of the embryo, e.g. brain, eye and anterior trunk.

It localises to the nucleus. The protein localises to the nuclear pore complex. Its function is as follows. Component of the nuclear pore complex. This is Nucleoporin 88 from Danio rerio (Zebrafish).